An 870-amino-acid polypeptide reads, in one-letter code: Endoribonuclease YSH1 (870 aa).

Positions 159, 161, 163, 164, 256, and 277 each coordinate Zn(2+). Histidine 499 (proton donor) is an active-site residue. Histidine 521 provides a ligand contact to Zn(2+). Residues 598–627 (ITELTEEKEEADEIKEDNGETDTTQKPNES) form a disordered region. Residues 601–612 (LTEEKEEADEIK) are compositionally biased toward acidic residues. Residues 618 to 627 (TDTTQKPNES) show a composition bias toward polar residues.

This sequence belongs to the metallo-beta-lactamase superfamily. RNA-metabolizing metallo-beta-lactamase-like family. CPSF2/YSH1 subfamily.

Its subcellular location is the nucleus. Its function is as follows. Component of the cleavage factor I (CF I) involved in pre-mRNA 3'-end processing. This Candida albicans (strain SC5314 / ATCC MYA-2876) (Yeast) protein is Endoribonuclease YSH1 (YSH1).